A 217-amino-acid chain; its full sequence is UPF0502 protein Smlt0097 (217 aa).

The protein belongs to the UPF0502 family.

This chain is UPF0502 protein Smlt0097, found in Stenotrophomonas maltophilia (strain K279a).